The chain runs to 539 residues: O-phosphoserine--tRNA(Cys) ligase (539 aa).

Substrate is bound by residues 188–190, 233–235, 275–276, and asparagine 327; these read HMT, SAS, and YY.

This sequence belongs to the class-II aminoacyl-tRNA synthetase family. O-phosphoseryl-tRNA(Cys) synthetase subfamily. As to quaternary structure, homotetramer. Interacts with SepCysS.

It carries out the reaction tRNA(Cys) + O-phospho-L-serine + ATP = O-phospho-L-seryl-tRNA(Cys) + AMP + diphosphate. Catalyzes the attachment of O-phosphoserine (Sep) to tRNA(Cys). The chain is O-phosphoserine--tRNA(Cys) ligase from Methanosarcina acetivorans (strain ATCC 35395 / DSM 2834 / JCM 12185 / C2A).